The following is a 253-amino-acid chain: MLNKRVIPCLDVNNGRVVKGTSFVNLRDAGDPVELAARYYREGADELVFLDISATTEERKTMAEVVEKVSKEVFIPLCVGGGLRSIADMTTLLRAGADKVSVNSAAVSDPDLISRGAEKFGRQCIVVAIDAKREGNSWQVYTHSGKKPTGLDAVEWAMKAEQLGAGEILLTSIDADGKNTGYDNELNREVGSRLNIPVIASGGAGSPEDLYNALDKGQADAVLAASIFHYGRYSIAEVKKYLKSKGLPVRLEN.

Catalysis depends on residues aspartate 11 and aspartate 130.

This sequence belongs to the HisA/HisF family. Heterodimer of HisH and HisF.

Its subcellular location is the cytoplasm. It carries out the reaction 5-[(5-phospho-1-deoxy-D-ribulos-1-ylimino)methylamino]-1-(5-phospho-beta-D-ribosyl)imidazole-4-carboxamide + L-glutamine = D-erythro-1-(imidazol-4-yl)glycerol 3-phosphate + 5-amino-1-(5-phospho-beta-D-ribosyl)imidazole-4-carboxamide + L-glutamate + H(+). It functions in the pathway amino-acid biosynthesis; L-histidine biosynthesis; L-histidine from 5-phospho-alpha-D-ribose 1-diphosphate: step 5/9. IGPS catalyzes the conversion of PRFAR and glutamine to IGP, AICAR and glutamate. The HisF subunit catalyzes the cyclization activity that produces IGP and AICAR from PRFAR using the ammonia provided by the HisH subunit. This is Imidazole glycerol phosphate synthase subunit HisF from Dehalococcoides mccartyi (strain CBDB1).